We begin with the raw amino-acid sequence, 118 residues long: Large ribosomal subunit protein uL18 (118 aa).

This sequence belongs to the universal ribosomal protein uL18 family. As to quaternary structure, part of the 50S ribosomal subunit; part of the 5S rRNA/L5/L18/L25 subcomplex. Contacts the 5S and 23S rRNAs.

This is one of the proteins that bind and probably mediate the attachment of the 5S RNA into the large ribosomal subunit, where it forms part of the central protuberance. The sequence is that of Large ribosomal subunit protein uL18 from Rhizorhabdus wittichii (strain DSM 6014 / CCUG 31198 / JCM 15750 / NBRC 105917 / EY 4224 / RW1) (Sphingomonas wittichii).